Consider the following 433-residue polypeptide: MTIYHFVGIKGTGMSALAQVLHDMKCVVQGSDYDKRFFTQEALEARGIPIFPFSAQNIRENMVVIAGNAFPDTHEEIVAARELGVPVIRYHQFLGDFLQKFTSIAVTGAHGKTSTTGLLAHVMQGAKPTSYLIGDGSGKGREGSEYFVFEACEYRRHFLAYSPDYAIMTNIDFDHPDYFANIEDVFSAFQQMAWQVKKGIIACGDDEYLQKIQAKVPVVFYGFGEDNDFQARNIVKTPEGTSFDVFVRHTFFASFHIPRYGDHNVLNALAVIALCHYEGIDVNIIQERLKTFPGVKRRFHEKMLGSQVLIDDYAHHPTEIRATIEAARQKYPERQIVAIFQPHTYTRTQTFLDEFAESLSLADAVYLCDIFSSAREHQGKLSIEDLRAKIEGAKLLDEEQVDVLKQHDNAVLIFMGAGDIQKFQEKYEQSVHV.

108 to 114 provides a ligand contact to ATP; sequence GAHGKTS.

It belongs to the MurCDEF family.

The protein localises to the cytoplasm. It carries out the reaction UDP-N-acetyl-alpha-D-muramate + L-alanine + ATP = UDP-N-acetyl-alpha-D-muramoyl-L-alanine + ADP + phosphate + H(+). It functions in the pathway cell wall biogenesis; peptidoglycan biosynthesis. Cell wall formation. The sequence is that of UDP-N-acetylmuramate--L-alanine ligase from Anoxybacillus flavithermus (strain DSM 21510 / WK1).